The chain runs to 262 residues: tRNA pseudouridine synthase A (262 aa).

The active-site Nucleophile is Asp55. Tyr116 contributes to the substrate binding site.

The protein belongs to the tRNA pseudouridine synthase TruA family. Homodimer.

It catalyses the reaction uridine(38/39/40) in tRNA = pseudouridine(38/39/40) in tRNA. Its function is as follows. Formation of pseudouridine at positions 38, 39 and 40 in the anticodon stem and loop of transfer RNAs. The protein is tRNA pseudouridine synthase A of Bdellovibrio bacteriovorus (strain ATCC 15356 / DSM 50701 / NCIMB 9529 / HD100).